We begin with the raw amino-acid sequence, 400 residues long: MTYQAPDENGFYGKFGGRFVPETLMKAVKELDEAYQASKTDPAFQKELNYYLKEYVGRETPLYFAEQLTAHAGGAKIYLKREDLNHTGAHKINNTIGQALLARQMGKQKVVAETGAGQHGVATATVAALFNMKCTIFMGEEDVKRQSLNVFRMELLGAKVVSVKAGSRTLKDAVNEALRFWVANVEDTHYIMGSVLGPHPFPEIVRDYQSVIGIEARKQHLEKEGKLPDAIVACVGGGSNAMGLFYPFVDDASVQMHGVEAAGHGLETEFHAATISKGEIGILHGAMMDVLQDENGQILEAFSISAGLDYPGIGPEHSFFRDLGRAAYHSVTDDEAVEAFQLLCRTEGIIPALESSHAISYAVKLASKMRPEESMVVCLSGRGDKDVNQLKERLEGQTND.

Lysine 91 carries the post-translational modification N6-(pyridoxal phosphate)lysine.

The protein belongs to the TrpB family. Tetramer of two alpha and two beta chains. Pyridoxal 5'-phosphate serves as cofactor.

The catalysed reaction is (1S,2R)-1-C-(indol-3-yl)glycerol 3-phosphate + L-serine = D-glyceraldehyde 3-phosphate + L-tryptophan + H2O. It participates in amino-acid biosynthesis; L-tryptophan biosynthesis; L-tryptophan from chorismate: step 5/5. The beta subunit is responsible for the synthesis of L-tryptophan from indole and L-serine. In Listeria monocytogenes serovar 1/2a (strain ATCC BAA-679 / EGD-e), this protein is Tryptophan synthase beta chain.